Reading from the N-terminus, the 296-residue chain is Protease HtpX homolog (296 aa).

The next 2 membrane-spanning stretches (helical) occupy residues 14-34 (VVLL…VGYL) and 39-59 (YQFG…SMIF). A Zn(2+)-binding site is contributed by His143. Glu144 is a catalytic residue. Position 147 (His147) interacts with Zn(2+). 2 helical membrane passes run 158 to 178 (IAVA…RMLF) and 195 to 215 (ILVL…ASLV). A Zn(2+)-binding site is contributed by Glu224.

This sequence belongs to the peptidase M48B family. Zn(2+) serves as cofactor.

It localises to the cell membrane. The protein is Protease HtpX homolog of Streptococcus agalactiae serotype III (strain NEM316).